The sequence spans 479 residues: Integrin-linked protein kinase 1 (479 aa).

2 positions are modified to phosphoserine: serine 17 and serine 26. Positions 29 to 73 (FTRQSSLDPRRTNMRFSFGRQSSLDPIRRSPDSSKSDDEPHMSVP) are disordered. The span at 54-69 (PIRRSPDSSKSDDEPH) shows a compositional bias: basic and acidic residues. ANK repeat units follow at residues 77-106 (DSTMQLLFMASKGDVRGIEELLDEGIDVNS) and 110-139 (DGRTALHIAACEGHLGVVKALLSRRANIDA). The Protein kinase domain occupies 194–461 (LEVQVRKSDG…EIIIRLDKIV (268 aa)). Residues 200-208 (KSDGISKGA) and lysine 222 contribute to the ATP site. Catalysis depends on aspartate 319, which acts as the Proton acceptor.

The protein belongs to the protein kinase superfamily. Ser/Thr protein kinase family. Interacts with CML9 and POT5/HAK5. Post-translationally, autophosphorylated at Ser-17 and Ser-26.

The protein resides in the cell membrane. The protein localises to the endoplasmic reticulum membrane. The enzyme catalyses L-seryl-[protein] + ATP = O-phospho-L-seryl-[protein] + ADP + H(+). It catalyses the reaction L-threonyl-[protein] + ATP = O-phospho-L-threonyl-[protein] + ADP + H(+). With respect to regulation, kinase activity is suppressed by interaction with CML9. In terms of biological role, functions as a link between plant defense pathways, stress responses and potassium homeostasis. Promotes osmotic stress sensitivity, responses to the bacterial-derived pathogen-associated molecular pattern (PAMP) flg22, and resistance to bacterial pathogens. Promotes the accumulation of POT5/HAK5, a potassium transporter that mediates high-affinity uptake during potassium deficiency. This Arabidopsis thaliana (Mouse-ear cress) protein is Integrin-linked protein kinase 1.